Consider the following 201-residue polypeptide: Protein GrpE (201 aa).

This sequence belongs to the GrpE family. As to quaternary structure, homodimer.

It is found in the cytoplasm. Participates actively in the response to hyperosmotic and heat shock by preventing the aggregation of stress-denatured proteins, in association with DnaK and GrpE. It is the nucleotide exchange factor for DnaK and may function as a thermosensor. Unfolded proteins bind initially to DnaJ; upon interaction with the DnaJ-bound protein, DnaK hydrolyzes its bound ATP, resulting in the formation of a stable complex. GrpE releases ADP from DnaK; ATP binding to DnaK triggers the release of the substrate protein, thus completing the reaction cycle. Several rounds of ATP-dependent interactions between DnaJ, DnaK and GrpE are required for fully efficient folding. The chain is Protein GrpE from Shewanella denitrificans (strain OS217 / ATCC BAA-1090 / DSM 15013).